Here is a 441-residue protein sequence, read N- to C-terminus: Insulinoma-associated protein 1 (441 aa).

Basic residues predominate over residues methionine 1–lysine 12. The tract at residues methionine 1–valine 20 is SNAG domain. Disordered stretches follow at residues methionine 1–leucine 31, threonine 43–arginine 189, leucine 205–proline 224, and arginine 278–leucine 316. The segment covering arginine 19–glycine 28 has biased composition (basic and acidic residues). Over residues asparagine 74–tyrosine 83 the composition is skewed to polar residues. The span at valine 89–tyrosine 98 shows a compositional bias: basic and acidic residues. Composition is skewed to low complexity over residues valine 138–serine 147 and glycine 169–proline 180. Residues tyrosine 258–histidine 280 form a C2H2-type 1 zinc finger. Residues alanine 292–threonine 302 show a composition bias toward basic and acidic residues. 3 consecutive C2H2-type zinc fingers follow at residues tyrosine 317–histidine 339, histidine 372–histidine 395, and tyrosine 400–histidine 423.

This sequence belongs to the INSM1 family.

It is found in the nucleus. May act as a transcriptional regulator. Plays a role in noradrenergic neuron, pancreatic and gastrointestinal endocrine cells differentiation during embryonic development. The sequence is that of Insulinoma-associated protein 1 (insm1) from Xenopus tropicalis (Western clawed frog).